The sequence spans 247 residues: Mast cell protease 2 (247 aa).

The signal sequence occupies residues 1 to 19; the sequence is MHLLALHLLLFLLGSRAKA. The propeptide at 20–21 is activation peptide; that stretch reads GE. Residues 22–245 form the Peptidase S1 domain; the sequence is IIGGTECKPH…YRPWINKILR (224 aa). Cys-51 and Cys-67 form a disulfide bridge. Catalysis depends on His-66, which acts as the Charge relay system. Asn-80 carries an N-linked (GlcNAc...) asparagine glycan. Asp-110 serves as the catalytic Charge relay system. Disulfide bonds link Cys-144-Cys-209 and Cys-175-Cys-188. Ser-203 functions as the Charge relay system in the catalytic mechanism.

The protein belongs to the peptidase S1 family. Granzyme subfamily.

This chain is Mast cell protease 2, found in Meriones unguiculatus (Mongolian jird).